Reading from the N-terminus, the 386-residue chain is Succinate--CoA ligase [ADP-forming] subunit beta (386 aa).

Residues 9 to 244 form the ATP-grasp domain; that stretch reads KEILHKFNVP…YDEEVKEEIE (236 aa). ATP-binding positions include K46, 53–55, E99, S102, and E107; that span reads GRG. Residues N199 and D213 each contribute to the Mg(2+) site. Residues N264 and 321-323 each bind substrate; that span reads GIM.

Belongs to the succinate/malate CoA ligase beta subunit family. As to quaternary structure, heterotetramer of two alpha and two beta subunits. Mg(2+) is required as a cofactor.

The enzyme catalyses succinate + ATP + CoA = succinyl-CoA + ADP + phosphate. It carries out the reaction GTP + succinate + CoA = succinyl-CoA + GDP + phosphate. It functions in the pathway carbohydrate metabolism; tricarboxylic acid cycle; succinate from succinyl-CoA (ligase route): step 1/1. Functionally, succinyl-CoA synthetase functions in the citric acid cycle (TCA), coupling the hydrolysis of succinyl-CoA to the synthesis of either ATP or GTP and thus represents the only step of substrate-level phosphorylation in the TCA. The beta subunit provides nucleotide specificity of the enzyme and binds the substrate succinate, while the binding sites for coenzyme A and phosphate are found in the alpha subunit. In Wolbachia pipientis subsp. Culex pipiens (strain wPip), this protein is Succinate--CoA ligase [ADP-forming] subunit beta.